Here is a 585-residue protein sequence, read N- to C-terminus: Zinc finger protein 496 (585 aa).

A disordered region spans residues 1 to 41; that stretch reads MPTALCPRVLAPKESEEPRKMRSPPGENPSPQGEPPSPESS. Over residues 11–20 the composition is skewed to basic and acidic residues; it reads APKESEEPRK. Lys13 participates in a covalent cross-link: Glycyl lysine isopeptide (Lys-Gly) (interchain with G-Cter in SUMO2). Pro residues predominate over residues 26-38; it reads GENPSPQGEPPSP. One can recognise an SCAN box domain in the interval 42–124; that stretch reads RRLFRRFRYQ…AAVEALEREP (83 aa). Residues 141 to 167 form a disordered region; sequence DDGDGPAAPQDLEQERMSAESQSYPDA. Ser182 bears the Phosphoserine mark. The 75-residue stretch at 220–294 folds into the KRAB domain; the sequence is SPFKDMILCF…DLQDKEIPQA (75 aa). Positions 358-397 are disordered; the sequence is SSSGDEDSQHSPYCTEELRSPPEDLHSVPAHQSNASAEGE. The segment covering 373 to 383 has biased composition (basic and acidic residues); the sequence is EELRSPPEDLH. Positions 387–397 are enriched in polar residues; sequence AHQSNASAEGE. Residues 405–427 form a C2H2-type 1; degenerate zinc finger; it reads YVCPNCGKIFRWRVNFIRHLRSR. C2H2-type zinc fingers lie at residues 433–455 and 461–483; these read HKCS…LETH and YRCT…RRIH. The disordered stretch occupies residues 483–506; it reads HLQPASQQPMKKSEEEALETEGTG. Lys494 is covalently cross-linked (Glycyl lysine isopeptide (Lys-Gly) (interchain with G-Cter in SUMO2)). 2 consecutive C2H2-type zinc fingers follow at residues 520-543 and 551-573; these read FQCG…RHCH and FQCR…ERLH. The Nuclear localization signal signature appears at 575–579; that stretch reads KRRSK.

It belongs to the krueppel C2H2-type zinc-finger protein family. Interacts (via zinc-fingers) with JARID2. Interacts with NSD1.

It is found in the nucleus. Its function is as follows. DNA-binding transcription factor that can both act as an activator and a repressor. The protein is Zinc finger protein 496 (Znf496) of Mus musculus (Mouse).